The chain runs to 157 residues: NudC domain-containing protein 2 (157 aa).

Ser-2 bears the N-acetylserine mark. The region spanning 14–104 (CGTPWGQWYQ…DAANCWTSLL (91 aa)) is the CS domain. The interval 134–157 (FDFSGAEISGNYTKGGPDFSNLEK) is disordered. Ser-142 carries the phosphoserine modification. A Phosphotyrosine modification is found at Tyr-145.

Interacts with LIS1.

The protein resides in the chromosome. Its subcellular location is the centromere. It is found in the kinetochore. It localises to the cytoplasm. The protein localises to the cytoskeleton. The protein resides in the microtubule organizing center. Its subcellular location is the centrosome. It is found in the spindle pole. Functionally, may regulate the LIS1/dynein pathway by stabilizing LIS1 with Hsp90 chaperone. This Mus musculus (Mouse) protein is NudC domain-containing protein 2 (Nudcd2).